Reading from the N-terminus, the 153-residue chain is Ribosome maturation factor RimP (153 aa).

This sequence belongs to the RimP family.

The protein localises to the cytoplasm. In terms of biological role, required for maturation of 30S ribosomal subunits. The polypeptide is Ribosome maturation factor RimP (Burkholderia mallei (strain NCTC 10229)).